The chain runs to 1027 residues: Kinesin heavy chain isoform 5A (1027 aa).

Alanine 2 is modified (N-acetylalanine). The 319-residue stretch at 9-327 folds into the Kinesin motor domain; the sequence is SIKVLCRFRP…LMFGQRAKTI (319 aa). An ATP-binding site is contributed by 86 to 93; the sequence is GQTSSGKT. The microtubule-binding stretch occupies residues 174-315; it reads VSSPEEILDV…PSSYNDAETK (142 aa). A necessary for interaction with ZFYVE27 region spans residues 271-361; the sequence is EGTKSYVPYR…KTKAQKETIA (91 aa). Residues 331–905 adopt a coiled-coil conformation; sequence ASVNLELTAE…EVDRIKEAVR (575 aa). The interaction with BICD2 stretch occupies residues 353–1027; the sequence is TKAQKETIAK…FPLHQETAAS (675 aa). Position 397 is a phosphothreonine (threonine 397). The segment at 906–936 is disordered; it reads YKSSGKRGHSAQIAKPVRPGHYPASSPTNPY. Residues 907-1027 are globular; that stretch reads KSSGKRGHSA…FPLHQETAAS (121 aa).

It belongs to the TRAFAC class myosin-kinesin ATPase superfamily. Kinesin family. Kinesin subfamily. Oligomer composed of two heavy chains and two light chains. Interacts with GRIP1. Interacts with FMR1 (via C-terminus); this interaction is increased in a mGluR-dependent manner. Interacts with BORCS5. Interacts with ZFYVE27. Interacts with VAPA, VAPB, SURF4, RAB11A (GDP-bound form), RAB11B (GDP-bound form) and RTN3 in a ZFYVE27-dependent manner. Interacts with BICD2. Interacts with DTNB. As to expression, expressed in brain.

The protein resides in the cytoplasm. Its subcellular location is the perinuclear region. It is found in the cytoskeleton. The protein localises to the perikaryon. It catalyses the reaction ATP + H2O + a kinesin associated with a microtubule at position (n) = ADP + phosphate a kinesin associated with a microtubule at position (n+1, toward the plus end).. In terms of biological role, microtubule-dependent motor required for slow axonal transport of neurofilament proteins (NFH, NFM and NFL). Can induce formation of neurite-like membrane protrusions in non-neuronal cells in a ZFYVE27-dependent manner. The ZFYVE27-KIF5A complex contributes to the vesicular transport of VAPA, VAPB, SURF4, RAB11A, RAB11B and RTN3 proteins in neurons. Required for anterograde axonal transportation of MAPK8IP3/JIP3 which is essential for MAPK8IP3/JIP3 function in axon elongation. The sequence is that of Kinesin heavy chain isoform 5A from Rattus norvegicus (Rat).